The following is a 907-amino-acid chain: Protein translocase subunit SecA (907 aa).

Residues Gln-86, 104 to 108 (GEGKT), and Asp-511 each bind ATP. Composition is skewed to basic and acidic residues over residues 838-856 (AQEE…HESV) and 869-888 (EEAP…KRND). The disordered stretch occupies residues 838 to 907 (AQEEWKESMS…YKQCHGKVVD (70 aa)). The Zn(2+) site is built by Cys-890, Cys-892, Cys-901, and His-902. The segment covering 896–907 (KKYKQCHGKVVD) has biased composition (basic residues).

This sequence belongs to the SecA family. As to quaternary structure, monomer and homodimer. Part of the essential Sec protein translocation apparatus which comprises SecA, SecYEG and auxiliary proteins SecDF-YajC and YidC. Zn(2+) is required as a cofactor.

It is found in the cell inner membrane. Its subcellular location is the cytoplasm. It catalyses the reaction ATP + H2O + cellular proteinSide 1 = ADP + phosphate + cellular proteinSide 2.. Its function is as follows. Part of the Sec protein translocase complex. Interacts with the SecYEG preprotein conducting channel. Has a central role in coupling the hydrolysis of ATP to the transfer of proteins into and across the cell membrane, serving both as a receptor for the preprotein-SecB complex and as an ATP-driven molecular motor driving the stepwise translocation of polypeptide chains across the membrane. The sequence is that of Protein translocase subunit SecA from Francisella philomiragia subsp. philomiragia (strain ATCC 25017 / CCUG 19701 / FSC 153 / O#319-036).